The chain runs to 129 residues: ATP synthase epsilon chain (129 aa).

This sequence belongs to the ATPase epsilon chain family. As to quaternary structure, F-type ATPases have 2 components, CF(1) - the catalytic core - and CF(0) - the membrane proton channel. CF(1) has five subunits: alpha(3), beta(3), gamma(1), delta(1), epsilon(1). CF(0) has three main subunits: a, b and c.

It localises to the cell inner membrane. Produces ATP from ADP in the presence of a proton gradient across the membrane. This chain is ATP synthase epsilon chain, found in Campylobacter concisus (strain 13826).